The chain runs to 306 residues: Ornithine carbamoyltransferase (306 aa).

Carbamoyl phosphate-binding positions include 50 to 53 (STRT), Gln77, Arg101, and 128 to 131 (HPCQ). Residues Asn160, Asp224, and 228-229 (SM) each bind L-ornithine. Carbamoyl phosphate-binding positions include 261–262 (CL) and Arg289.

It belongs to the aspartate/ornithine carbamoyltransferase superfamily. OTCase family.

The protein resides in the cytoplasm. It carries out the reaction carbamoyl phosphate + L-ornithine = L-citrulline + phosphate + H(+). It functions in the pathway amino-acid biosynthesis; L-arginine biosynthesis; L-arginine from L-ornithine and carbamoyl phosphate: step 1/3. Functionally, reversibly catalyzes the transfer of the carbamoyl group from carbamoyl phosphate (CP) to the N(epsilon) atom of ornithine (ORN) to produce L-citrulline. This is Ornithine carbamoyltransferase from Aquifex aeolicus (strain VF5).